We begin with the raw amino-acid sequence, 186 residues long: UPF0301 protein CGSHiEE_01530 (186 aa).

Belongs to the UPF0301 (AlgH) family.

In Haemophilus influenzae (strain PittEE), this protein is UPF0301 protein CGSHiEE_01530.